We begin with the raw amino-acid sequence, 94 residues long: Co-chaperonin GroES (94 aa).

In terms of assembly, heptamer of 7 subunits arranged in a ring. Interacts with the chaperonin GroEL.

The protein resides in the cytoplasm. Functionally, together with the chaperonin GroEL, plays an essential role in assisting protein folding. The GroEL-GroES system forms a nano-cage that allows encapsulation of the non-native substrate proteins and provides a physical environment optimized to promote and accelerate protein folding. GroES binds to the apical surface of the GroEL ring, thereby capping the opening of the GroEL channel. The polypeptide is Co-chaperonin GroES (Thermoanaerobacter brockii (Thermoanaerobium brockii)).